The following is a 352-amino-acid chain: Holliday junction branch migration complex subunit RuvB (352 aa).

Residues 13-201 (IPRSRKELRL…FGLCHKIEFY (189 aa)) form a large ATPase domain (RuvB-L) region. ATP contacts are provided by residues Leu-37, Arg-41, Gly-82, Lys-85, Thr-86, Thr-87, 148-150 (EDF), Arg-191, Tyr-201, and Arg-238. Thr-86 serves as a coordination point for Mg(2+). A small ATPAse domain (RuvB-S) region spans residues 202 to 273 (SNDELKQIIF…IIEKALDSQK (72 aa)). A head domain (RuvB-H) region spans residues 276–352 (NRGLDNVDRK…KYISSNNEKY (77 aa)). Residues Arg-330 and Arg-335 each contribute to the DNA site.

The protein belongs to the RuvB family. Homohexamer. Forms an RuvA(8)-RuvB(12)-Holliday junction (HJ) complex. HJ DNA is sandwiched between 2 RuvA tetramers; dsDNA enters through RuvA and exits via RuvB. An RuvB hexamer assembles on each DNA strand where it exits the tetramer. Each RuvB hexamer is contacted by two RuvA subunits (via domain III) on 2 adjacent RuvB subunits; this complex drives branch migration. In the full resolvosome a probable DNA-RuvA(4)-RuvB(12)-RuvC(2) complex forms which resolves the HJ.

It localises to the cytoplasm. It carries out the reaction ATP + H2O = ADP + phosphate + H(+). The RuvA-RuvB-RuvC complex processes Holliday junction (HJ) DNA during genetic recombination and DNA repair, while the RuvA-RuvB complex plays an important role in the rescue of blocked DNA replication forks via replication fork reversal (RFR). RuvA specifically binds to HJ cruciform DNA, conferring on it an open structure. The RuvB hexamer acts as an ATP-dependent pump, pulling dsDNA into and through the RuvAB complex. RuvB forms 2 homohexamers on either side of HJ DNA bound by 1 or 2 RuvA tetramers; 4 subunits per hexamer contact DNA at a time. Coordinated motions by a converter formed by DNA-disengaged RuvB subunits stimulates ATP hydrolysis and nucleotide exchange. Immobilization of the converter enables RuvB to convert the ATP-contained energy into a lever motion, pulling 2 nucleotides of DNA out of the RuvA tetramer per ATP hydrolyzed, thus driving DNA branch migration. The RuvB motors rotate together with the DNA substrate, which together with the progressing nucleotide cycle form the mechanistic basis for DNA recombination by continuous HJ branch migration. Branch migration allows RuvC to scan DNA until it finds its consensus sequence, where it cleaves and resolves cruciform DNA. This is Holliday junction branch migration complex subunit RuvB from Prochlorococcus marinus (strain MIT 9515).